A 320-amino-acid chain; its full sequence is Cytochrome f (320 aa).

The signal sequence occupies residues 1-32 (MKTKKSYDKVTRWVTPPILMLIIIHIITGACS). The heme site is built by Tyr-36, Cys-56, Cys-59, and His-60. Residues 286 to 306 (IQGLLGFLASVVLAQIFLVLK) traverse the membrane as a helical segment.

It belongs to the cytochrome f family. The 4 large subunits of the cytochrome b6-f complex are cytochrome b6, subunit IV (17 kDa polypeptide, petD), cytochrome f and the Rieske protein, while the 4 small subunits are PetG, PetL, PetM and PetN. The complex functions as a dimer. Requires heme as cofactor.

It is found in the plastid. It localises to the chloroplast thylakoid membrane. In terms of biological role, component of the cytochrome b6-f complex, which mediates electron transfer between photosystem II (PSII) and photosystem I (PSI), cyclic electron flow around PSI, and state transitions. This chain is Cytochrome f, found in Gnetum parvifolium (Small-leaved jointfir).